The primary structure comprises 441 residues: Serine hydroxymethyltransferase (441 aa).

Residues L119 and 123–125 (GHL) contribute to the (6S)-5,6,7,8-tetrahydrofolate site. K228 is modified (N6-(pyridoxal phosphate)lysine). 370–372 (SPF) is a (6S)-5,6,7,8-tetrahydrofolate binding site.

It belongs to the SHMT family. In terms of assembly, homodimer. Pyridoxal 5'-phosphate serves as cofactor.

It localises to the cytoplasm. It carries out the reaction (6R)-5,10-methylene-5,6,7,8-tetrahydrofolate + glycine + H2O = (6S)-5,6,7,8-tetrahydrofolate + L-serine. It functions in the pathway one-carbon metabolism; tetrahydrofolate interconversion. The protein operates within amino-acid biosynthesis; glycine biosynthesis; glycine from L-serine: step 1/1. Catalyzes the reversible interconversion of serine and glycine with tetrahydrofolate (THF) serving as the one-carbon carrier. This reaction serves as the major source of one-carbon groups required for the biosynthesis of purines, thymidylate, methionine, and other important biomolecules. Also exhibits THF-independent aldolase activity toward beta-hydroxyamino acids, producing glycine and aldehydes, via a retro-aldol mechanism. The polypeptide is Serine hydroxymethyltransferase (Chlorobium phaeovibrioides (strain DSM 265 / 1930) (Prosthecochloris vibrioformis (strain DSM 265))).